Reading from the N-terminus, the 380-residue chain is Ribosomal RNA large subunit methyltransferase G (380 aa).

The protein belongs to the methyltransferase superfamily. RlmG family.

The protein localises to the cytoplasm. The catalysed reaction is guanosine(1835) in 23S rRNA + S-adenosyl-L-methionine = N(2)-methylguanosine(1835) in 23S rRNA + S-adenosyl-L-homocysteine + H(+). Its function is as follows. Specifically methylates the guanine in position 1835 (m2G1835) of 23S rRNA. This is Ribosomal RNA large subunit methyltransferase G from Aeromonas hydrophila subsp. hydrophila (strain ATCC 7966 / DSM 30187 / BCRC 13018 / CCUG 14551 / JCM 1027 / KCTC 2358 / NCIMB 9240 / NCTC 8049).